We begin with the raw amino-acid sequence, 454 residues long: Response regulator PleD (454 aa).

2 Response regulatory domains span residues 4–120 (RILV…RSLT) and 155–269 (RVLI…KTQI). Residues aspartate 9, aspartate 10, aspartate 53, and methionine 55 each contribute to the Mg(2+) site. At aspartate 53 the chain carries 4-aspartylphosphate. A GGDEF domain is found at 319 to 454 (DPVSALLIDI…GRNAVVGKAA (136 aa)). Substrate-binding residues include asparagine 335 and aspartate 344. Glutamate 370 serves as the catalytic Proton acceptor.

As to quaternary structure, homodimer. Inactive monomer in solution. Phosphorylated by PleC and DivJ. Phosphorylation stimulates cyclase activity.

It is found in the cytoplasm. The enzyme catalyses 2 GTP = 3',3'-c-di-GMP + 2 diphosphate. It participates in purine metabolism; 3',5'-cyclic di-GMP biosynthesis. With respect to regulation, allosterically inhibited by the product c-di-GMP. Response regulator that is part of a signal transduction pathway controlling cell differentiation in the swarmer-to-stalked cell transition. Its function is as follows. Catalyzes the condensation of two GTP molecules to the cyclic dinucleotide di-GMP (c-di-GMP), which acts as a secondary messenger. This is Response regulator PleD (pleD) from Caulobacter vibrioides (strain ATCC 19089 / CIP 103742 / CB 15) (Caulobacter crescentus).